A 301-amino-acid polypeptide reads, in one-letter code: Lysozyme-like protein 3 (301 aa).

Residues 1–15 (MKLFALLVSITLCYS) form the signal peptide. The region spanning 64 to 282 (HAYSVDISFH…HLSQIVHFST (219 aa)) is the Ch-type lysozyme domain.

The protein belongs to the glycosyl hydrolase 25 family.

Functionally, plays a role in the stress response to heavy metals such as copper, probably in a kgb-1-dependent manner. In Caenorhabditis elegans, this protein is Lysozyme-like protein 3.